Here is a 264-residue protein sequence, read N- to C-terminus: MKTYLQLLEHILQQGVEKSDRTGTGTLSVFGYQMRFDLTKGFPLVTTKKLHTRSIVHELLWFLRGDTNISYLKENGVTIWDEWADNNGDLGPVYGKQWRSWPTADGHTIDQLSDVVQQIKSNPDSRRLIVSAWNVGELDKMALMPCHALFQFYVANNKLSCQLYQRSADVFLGVPFNIASYSLLTHMVAQQCNLDVAEFIWTGGDCHLYLNHLEQAQIQLTREPLPLPSLTIKRKPASLFDYAYEDFEFLNYQSHPAIKAPIAV.

Residue Arg-21 participates in dUMP binding. (6R)-5,10-methylene-5,6,7,8-tetrahydrofolate is bound at residue His-51. 126-127 (RR) lines the dUMP pocket. The Nucleophile role is filled by Cys-146. DUMP is bound by residues 166-169 (RSAD), Asn-177, and 207-209 (HLY). Residue Asp-169 participates in (6R)-5,10-methylene-5,6,7,8-tetrahydrofolate binding. Ala-263 contacts (6R)-5,10-methylene-5,6,7,8-tetrahydrofolate.

It belongs to the thymidylate synthase family. Bacterial-type ThyA subfamily. Homodimer.

It is found in the cytoplasm. It catalyses the reaction dUMP + (6R)-5,10-methylene-5,6,7,8-tetrahydrofolate = 7,8-dihydrofolate + dTMP. It participates in pyrimidine metabolism; dTTP biosynthesis. Catalyzes the reductive methylation of 2'-deoxyuridine-5'-monophosphate (dUMP) to 2'-deoxythymidine-5'-monophosphate (dTMP) while utilizing 5,10-methylenetetrahydrofolate (mTHF) as the methyl donor and reductant in the reaction, yielding dihydrofolate (DHF) as a by-product. This enzymatic reaction provides an intracellular de novo source of dTMP, an essential precursor for DNA biosynthesis. This is Thymidylate synthase from Legionella pneumophila (strain Paris).